The primary structure comprises 925 residues: Isoleucine--tRNA ligase (925 aa).

Residues P57–H67 carry the 'HIGH' region motif. Residue E553 participates in L-isoleucyl-5'-AMP binding. The 'KMSKS' region signature appears at K594–S598. Residue K597 coordinates ATP. Positions 889, 892, 909, and 912 each coordinate Zn(2+).

This sequence belongs to the class-I aminoacyl-tRNA synthetase family. IleS type 1 subfamily. Monomer. Requires Zn(2+) as cofactor.

Its subcellular location is the cytoplasm. The catalysed reaction is tRNA(Ile) + L-isoleucine + ATP = L-isoleucyl-tRNA(Ile) + AMP + diphosphate. In terms of biological role, catalyzes the attachment of isoleucine to tRNA(Ile). As IleRS can inadvertently accommodate and process structurally similar amino acids such as valine, to avoid such errors it has two additional distinct tRNA(Ile)-dependent editing activities. One activity is designated as 'pretransfer' editing and involves the hydrolysis of activated Val-AMP. The other activity is designated 'posttransfer' editing and involves deacylation of mischarged Val-tRNA(Ile). In Brevibacillus brevis (strain 47 / JCM 6285 / NBRC 100599), this protein is Isoleucine--tRNA ligase.